The sequence spans 393 residues: Na(+)/H(+) antiporter NhaA (393 aa).

Transmembrane regions (helical) follow at residues 24-44, 58-78, 96-116, 126-146, 155-175, 178-198, 214-234, 267-287, 300-320, 338-358, and 369-389; these read GGLVLMAVALAAIVTANSPLA, LSLLHWINDALMALFFLLVGL, ILPGAAALGGMLFPALFYILF, GWAIPTATDIAFALGVISLFG, IFLAALAIIDDLGAVVIIALF, SDLNLLALAAAAAVLAALYGM, AVLWVLVFASGIHATLAGVLL, VAFIVVPIFGFANAGVSFSGV, VAAGLLLGKLVGVLSTVFLLV, GVAALCGIGFTMSLFIGLLAF, and MGILLGSLLSGLVGAAMLATF.

This sequence belongs to the NhaA Na(+)/H(+) (TC 2.A.33) antiporter family.

Its subcellular location is the cell inner membrane. It catalyses the reaction Na(+)(in) + 2 H(+)(out) = Na(+)(out) + 2 H(+)(in). Na(+)/H(+) antiporter that extrudes sodium in exchange for external protons. This Rhizobium etli (strain ATCC 51251 / DSM 11541 / JCM 21823 / NBRC 15573 / CFN 42) protein is Na(+)/H(+) antiporter NhaA.